A 283-amino-acid chain; its full sequence is ATP phosphoribosyltransferase (283 aa).

It belongs to the ATP phosphoribosyltransferase family. Long subfamily. Equilibrium between an active dimeric form, an inactive hexameric form and higher aggregates. Interconversion between the various forms is largely reversible and is influenced by the natural substrates and inhibitors of the enzyme. Requires Mg(2+) as cofactor.

It is found in the cytoplasm. It catalyses the reaction 1-(5-phospho-beta-D-ribosyl)-ATP + diphosphate = 5-phospho-alpha-D-ribose 1-diphosphate + ATP. The protein operates within amino-acid biosynthesis; L-histidine biosynthesis; L-histidine from 5-phospho-alpha-D-ribose 1-diphosphate: step 1/9. With respect to regulation, feedback inhibited by histidine. Catalyzes the condensation of ATP and 5-phosphoribose 1-diphosphate to form N'-(5'-phosphoribosyl)-ATP (PR-ATP). Has a crucial role in the pathway because the rate of histidine biosynthesis seems to be controlled primarily by regulation of HisG enzymatic activity. This chain is ATP phosphoribosyltransferase, found in Mycobacterium sp. (strain KMS).